We begin with the raw amino-acid sequence, 810 residues long: Phenylalanine--tRNA ligase beta subunit (810 aa).

The region spanning 39-151 (RTWAAGVVVG…AGLQAGQPVG (113 aa)) is the tRNA-binding domain. Residues 408–494 (EPEHSITLRL…RLYGYDNFGE (87 aa)) enclose the B5 domain. Mg(2+)-binding residues include Asp-472, Asp-478, Glu-481, and Glu-482. Positions 716–809 (SSFPASDRDL…LVERFRVTLR (94 aa)) constitute an FDX-ACB domain.

It belongs to the phenylalanyl-tRNA synthetase beta subunit family. Type 1 subfamily. As to quaternary structure, tetramer of two alpha and two beta subunits. Requires Mg(2+) as cofactor.

The protein localises to the cytoplasm. The enzyme catalyses tRNA(Phe) + L-phenylalanine + ATP = L-phenylalanyl-tRNA(Phe) + AMP + diphosphate + H(+). In Synechococcus elongatus (strain ATCC 33912 / PCC 7942 / FACHB-805) (Anacystis nidulans R2), this protein is Phenylalanine--tRNA ligase beta subunit (pheT).